The following is a 193-amino-acid chain: Ganglioside GM2 activator (193 aa).

Positions 1–20 are cleaved as a signal peptide; sequence MHRLPLLLLLGLLLAGSVAP. 4 disulfides stabilise this stretch: C39/C183, C99/C106, C112/C138, and C125/C136. The N-linked (GlcNAc...) asparagine glycan is linked to N151.

Widely expressed. Most abundant in kidney and testis.

It is found in the lysosome. It catalyses the reaction cholesterol(in) = cholesterol(out). Its function is as follows. Binds gangliosides and stimulates ganglioside GM2 degradation. It stimulates only the breakdown of ganglioside GM2 and glycolipid GA2 by beta-hexosaminidase A. It extracts single GM2 molecules from membranes and presents them in soluble form to beta-hexosaminidase A for cleavage of N-acetyl-D-galactosamine and conversion to GM3. The large binding pocket can accommodate several single chain phospholipids and fatty acids, GM2A also exhibits some calcium-independent phospholipase activity. Has cholesterol transfer activity. The chain is Ganglioside GM2 activator from Mus musculus (Mouse).